The sequence spans 778 residues: Serine/threonine-protein kinase BRSK1 (778 aa).

The segment covering 1 to 12 has biased composition (gly residues); sequence MSSGSKEGGGGS. Residues 1 to 29 are disordered; that stretch reads MSSGSKEGGGGSPAYHLPHPHPHPPQHAQ. In terms of domain architecture, Protein kinase spans 34–285; sequence YRLEKTLGKG…LEQIQKHPWY (252 aa). ATP is bound by residues 40 to 48 and K63; that span reads LGKGQTGLV. D156 acts as the Proton acceptor in catalysis. T189 is modified (phosphothreonine; by LKB1). Residues 314 to 356 form the UBA domain; the sequence is ELDPDVLESMASLGCFRDRERLHRELRSEEENQEKMIYYLLLD. The span at 362–383 shows a compositional bias: basic and acidic residues; sequence PSCEDQDLPPRNDVDPPRKRVD. Residues 362–548 form a disordered region; that stretch reads PSCEDQDLPP…SPGGGVGGAA (187 aa). A phosphoserine mark is found at S399, S443, S447, and S450. Positions 430–457 are enriched in low complexity; that stretch reads SRSVSGASTGLSSSPLSSPRSPVFSFSP. 4 positions are modified to omega-N-methylarginine: R466, R481, R484, and R498. The span at 491–508 shows a compositional bias: pro residues; the sequence is QPPPPSARSTPLPGPPGS. Position 508 is a phosphoserine (S508). Residues 509-533 are compositionally biased toward low complexity; the sequence is PRSSGGTPLHSPLHTPRASPTGTPG. Residue R525 is modified to Omega-N-methylarginine. Phosphothreonine occurs at positions 529 and 535. Position 550 is an omega-N-methylarginine (R550). The interval 560-588 is disordered; sequence FLGSPRFHRRKMQVPTAEEMSSLTPESSP. Position 583 is a phosphothreonine (T583). Residues S586, S587, and S601 each carry the phosphoserine modification. Residues 719–778 are disordered; it reads QPSVQALADEKNGAQTRPAGTPPRSLQPPPGRSDPDLSSSPRRGPPKDKKLLATNGTPLP.

This sequence belongs to the protein kinase superfamily. CAMK Ser/Thr protein kinase family. SNF1 subfamily. It depends on Mg(2+) as a cofactor. Post-translationally, phosphorylated at Thr-189 by STK11/LKB1 in complex with STE20-related adapter-alpha (STRADA) pseudo kinase and CAB39. Not phosphorylated at Thr-189 by CaMKK2. In contrast, it is phosphorylated and activated by CaMKK1. May be inactivated via dephosphorylation of Thr-189 by PP2C. Present in the gray matter of the brain and spinal cord (at protein level). Expressed in the nervous system, distributed within the brain and spinal cord of embryonic and postnatal animals.

It localises to the cytoplasm. The protein localises to the nucleus. The protein resides in the cytoskeleton. It is found in the microtubule organizing center. Its subcellular location is the centrosome. It localises to the synapse. The protein localises to the presynaptic active zone. The protein resides in the cytoplasmic vesicle. It is found in the secretory vesicle. Its subcellular location is the synaptic vesicle. The enzyme catalyses L-seryl-[protein] + ATP = O-phospho-L-seryl-[protein] + ADP + H(+). The catalysed reaction is L-threonyl-[protein] + ATP = O-phospho-L-threonyl-[protein] + ADP + H(+). It carries out the reaction L-seryl-[tau protein] + ATP = O-phospho-L-seryl-[tau protein] + ADP + H(+). It catalyses the reaction L-threonyl-[tau protein] + ATP = O-phospho-L-threonyl-[tau protein] + ADP + H(+). Its activity is regulated as follows. Activated by phosphorylation on Thr-189 by STK11/LKB1. In terms of biological role, serine/threonine-protein kinase that plays a key role in polarization of neurons and centrosome duplication. Phosphorylates CDC25B, CDC25C, MAPT/TAU, RIMS1, TUBG1, TUBG2 and WEE1. Following phosphorylation and activation by STK11/LKB1, acts as a key regulator of polarization of cortical neurons, probably by mediating phosphorylation of microtubule-associated proteins such as MAPT/TAU at 'Thr-504' and 'Ser-554'. Also regulates neuron polarization by mediating phosphorylation of WEE1 at 'Ser-642' in postmitotic neurons, leading to down-regulate WEE1 activity in polarized neurons. In neurons, localizes to synaptic vesicles and plays a role in neurotransmitter release, possibly by phosphorylating RIMS1. Also acts as a positive regulator of centrosome duplication by mediating phosphorylation of gamma-tubulin (TUBG1 and TUBG2) at 'Ser-131', leading to translocation of gamma-tubulin and its associated proteins to the centrosome. Involved in the UV-induced DNA damage checkpoint response, probably by inhibiting CDK1 activity through phosphorylation and activation of WEE1, and inhibition of CDC25B and CDC25C. The protein is Serine/threonine-protein kinase BRSK1 (Brsk1) of Mus musculus (Mouse).